Here is a 159-residue protein sequence, read N- to C-terminus: Phosphopantetheine adenylyltransferase (159 aa).

Residue S8 coordinates substrate. ATP is bound by residues 8–9 (SF) and H16. Substrate is bound by residues K40, T72, and R86. ATP contacts are provided by residues 87–89 (GLR), E97, and 122–128 (HSFVSSS).

It belongs to the bacterial CoaD family. Homohexamer. Mg(2+) is required as a cofactor.

The protein resides in the cytoplasm. The enzyme catalyses (R)-4'-phosphopantetheine + ATP + H(+) = 3'-dephospho-CoA + diphosphate. It participates in cofactor biosynthesis; coenzyme A biosynthesis; CoA from (R)-pantothenate: step 4/5. Functionally, reversibly transfers an adenylyl group from ATP to 4'-phosphopantetheine, yielding dephospho-CoA (dPCoA) and pyrophosphate. The sequence is that of Phosphopantetheine adenylyltransferase from Synechococcus sp. (strain JA-2-3B'a(2-13)) (Cyanobacteria bacterium Yellowstone B-Prime).